Reading from the N-terminus, the 211-residue chain is Bifunctional transcriptional activator/DNA repair enzyme AdaA (211 aa).

Cys54 (nucleophile; methyl group acceptor from methylphosphotriester) is an active-site residue. Zn(2+)-binding residues include Cys54, Cys58, Cys85, and Cys88. The 99-residue stretch at 102-200 (DLITEYIDKN…GQTPARFRQM (99 aa)) folds into the HTH araC/xylS-type domain. Residues 119-140 (ESLADICHGSPYHMHRTFKKIK) constitute a DNA-binding region (H-T-H motif).

It depends on Zn(2+) as a cofactor.

The catalysed reaction is (2'-deoxyribonucleoside 5'-methylphosphotriester)-DNA + L-cysteinyl-[protein] = 2'-deoxyribonucleotide-DNA + S-methyl-L-cysteinyl-[protein] + H(+). In terms of biological role, is involved in the adaptive response to alkylation damage in DNA caused by alkylating agents. Repairs the methylphosphotriester lesions in DNA by a direct and irreversible transfer of the methyl group to one of its own cysteine residues. Functionally, the methylation of AdaA by methylphosphotriesters in DNA leads to its activation as a transcriptional regulator that activates the transcription of the ada operon which consists of adaA and adaB, and of the adjacent gene alkA. This is Bifunctional transcriptional activator/DNA repair enzyme AdaA (adaA) from Bacillus subtilis (strain 168).